A 172-amino-acid chain; its full sequence is Shikimate kinase (172 aa).

8-15 contributes to the ATP binding site; that stretch reads GARASGKT.

Belongs to the shikimate kinase family.

It localises to the cytoplasm. The catalysed reaction is shikimate + ATP = 3-phosphoshikimate + ADP + H(+). Its pathway is metabolic intermediate biosynthesis; chorismate biosynthesis; chorismate from D-erythrose 4-phosphate and phosphoenolpyruvate: step 5/7. This chain is Shikimate kinase, found in Oleidesulfovibrio alaskensis (strain ATCC BAA-1058 / DSM 17464 / G20) (Desulfovibrio alaskensis).